The following is a 440-amino-acid chain: Translation initiation factor eIF2B subunit gamma (440 aa).

Belongs to the eIF-2B gamma/epsilon subunits family. In terms of assembly, component of the translation initiation factor 2B (eIF2B) complex which is a heterodecamer of two sets of five different subunits: alpha, beta, gamma, delta and epsilon. Subunits alpha, beta and delta comprise a regulatory subcomplex and subunits epsilon and gamma comprise a catalytic subcomplex. Within the complex, the hexameric regulatory complex resides at the center, with the two heterodimeric catalytic subcomplexes bound on opposite sides.

The protein resides in the cytoplasm. It localises to the cytosol. Its function is as follows. Acts as a component of the translation initiation factor 2B (eIF2B) complex, which catalyzes the exchange of GDP for GTP on the eukaryotic initiation factor 2 (eIF2) complex gamma subunit. Its guanine nucleotide exchange factor activity is repressed when bound to eIF2 complex phosphorylated on the alpha subunit, thereby limiting the amount of methionyl-initiator methionine tRNA available to the ribosome and consequently global translation is repressed. The chain is Translation initiation factor eIF2B subunit gamma (eif2b3) from Dictyostelium discoideum (Social amoeba).